Here is a 637-residue protein sequence, read N- to C-terminus: BUD13 homolog (637 aa).

Residues 18-53 (SGTDAGLEGGPEAGRKRRKKRPKPGGAGGKGMRIVD) are disordered. Lysine 65 participates in a covalent cross-link: Glycyl lysine isopeptide (Lys-Gly) (interchain with G-Cter in SUMO2). The segment at 104–470 (LLGGHGEDGH…KKQDQDTTDL (367 aa)) is disordered. Residues 108–119 (HGEDGHFHHDDQ) show a composition bias toward basic and acidic residues. Threonine 131 is modified (phosphothreonine). Serine 135 bears the Phosphoserine mark. Threonine 144 carries the post-translational modification Phosphothreonine. At serine 148 the chain carries Phosphoserine. Threonine 157 is subject to Phosphothreonine. Serine 161 is subject to Phosphoserine. Phosphothreonine is present on threonine 170. Serine 174 carries the phosphoserine modification. Threonine 183 carries the phosphothreonine modification. Serine 187 carries the post-translational modification Phosphoserine. 2 positions are modified to phosphothreonine: threonine 196 and threonine 209. Serine 213 is subject to Phosphoserine. Threonine 222 is modified (phosphothreonine). Phosphoserine is present on residues serine 226, serine 238, serine 259, serine 264, serine 272, serine 284, serine 285, and serine 297. Residues 260–275 (LGTSSPRQTHNHSPTA) are compositionally biased toward polar residues. Over residues 295–315 (HESPDLELHKAKSSKAAERAP) the composition is skewed to basic and acidic residues. The span at 318 to 335 (AASQSGLGPSHPSLSTNS) shows a compositional bias: polar residues. 2 positions are modified to phosphoserine: serine 341 and serine 344. The segment covering 353 to 362 (AHFEAKKQLD) has biased composition (basic and acidic residues). 5 positions are modified to phosphoserine: serine 371, serine 373, serine 376, serine 410, and serine 426. Residues 430 to 439 (RSPRPGKKTA) show a composition bias toward basic residues. The segment covering 453–465 (VQREHQELKKQDQ) has biased composition (basic and acidic residues). Positions 490 to 538 (NLKLERLEQRRKAEKDSERDELYAQWGKGLAQSRQQQQNVEDAMKEMQK) form a coiled coil. Tyrosine 512 carries the post-translational modification Phosphotyrosine. A disordered region spans residues 553-595 (LREQEREGDPMANFIKKNKAKENKNKKVKPRYSGPAPPPNRFN). At serine 585 the chain carries Phosphoserine.

It belongs to the CWC26 family. In terms of assembly, part of the activated spliceosome B/catalytic step 1 spliceosome, one of the forms of the spliceosome which has a well-formed active site but still cannot catalyze the branching reaction and is composed of at least 52 proteins, the U2, U5 and U6 snRNAs and the pre-mRNA. Component of the minor spliceosome, which splices U12-type introns.

It is found in the nucleus. Its function is as follows. Involved in pre-mRNA splicing as component of the activated spliceosome. As a component of the minor spliceosome, involved in the splicing of U12-type introns in pre-mRNAs. The protein is BUD13 homolog (Bud13) of Mus musculus (Mouse).